The sequence spans 136 residues: Large-conductance mechanosensitive channel (136 aa).

The next 2 helical transmembrane spans lie at 9–29 and 79–99; these read AFASRGNVIDMAVGIIIGAAF and IQTIIDFTIIAFAIFMGLKAI.

Belongs to the MscL family. In terms of assembly, homopentamer.

The protein resides in the cell inner membrane. Functionally, channel that opens in response to stretch forces in the membrane lipid bilayer. May participate in the regulation of osmotic pressure changes within the cell. The protein is Large-conductance mechanosensitive channel of Shewanella sp. (strain ANA-3).